The primary structure comprises 295 residues: Iron-sulfur cluster carrier protein (295 aa).

An ATP-binding site is contributed by 38-45 (GKGGVGKS).

This sequence belongs to the Mrp/NBP35 ATP-binding proteins family. In terms of assembly, homodimer.

In terms of biological role, binds and transfers iron-sulfur (Fe-S) clusters to target apoproteins. Can hydrolyze ATP. The chain is Iron-sulfur cluster carrier protein from Pyrococcus abyssi (strain GE5 / Orsay).